Here is a 310-residue protein sequence, read N- to C-terminus: Porphobilinogen deaminase (310 aa).

C242 carries the S-(dipyrrolylmethanemethyl)cysteine modification.

The protein belongs to the HMBS family. As to quaternary structure, monomer. Requires dipyrromethane as cofactor.

The catalysed reaction is 4 porphobilinogen + H2O = hydroxymethylbilane + 4 NH4(+). The protein operates within porphyrin-containing compound metabolism; protoporphyrin-IX biosynthesis; coproporphyrinogen-III from 5-aminolevulinate: step 2/4. Tetrapolymerization of the monopyrrole PBG into the hydroxymethylbilane pre-uroporphyrinogen in several discrete steps. The polypeptide is Porphobilinogen deaminase (Shewanella sp. (strain W3-18-1)).